The primary structure comprises 247 residues: Adenylyl-sulfate kinase (247 aa).

Positions 1–24 (MSQSNSDDSASSSTQQAGDGQDDV) are disordered. ATP is bound at residue 55-62 (GLSGCGKS). S146 (phosphoserine intermediate) is an active-site residue.

Belongs to the APS kinase family.

It carries out the reaction adenosine 5'-phosphosulfate + ATP = 3'-phosphoadenylyl sulfate + ADP + H(+). It participates in sulfur metabolism; hydrogen sulfide biosynthesis; sulfite from sulfate: step 2/3. Its function is as follows. Catalyzes the synthesis of activated sulfate. The chain is Adenylyl-sulfate kinase from Rhodopirellula baltica (strain DSM 10527 / NCIMB 13988 / SH1).